The chain runs to 143 residues: MIYGVGTDIIQIDRVRGVMERTRGRFVEKILGPREMKIYLARKARSEKRGLAFLCTRFAAKEAFSKAIGLGMRWPMTWRAMELLNQPSGEPAPHCTGELAEWVRERGLTVRVSVSDEHEYAVAFAIAERGGQLAAPQSEPASN.

Residues Asp-8 and Glu-62 each contribute to the Mg(2+) site.

It belongs to the P-Pant transferase superfamily. AcpS family. Mg(2+) serves as cofactor.

The protein resides in the cytoplasm. The catalysed reaction is apo-[ACP] + CoA = holo-[ACP] + adenosine 3',5'-bisphosphate + H(+). Transfers the 4'-phosphopantetheine moiety from coenzyme A to a Ser of acyl-carrier-protein. The polypeptide is Holo-[acyl-carrier-protein] synthase (Cupriavidus metallidurans (strain ATCC 43123 / DSM 2839 / NBRC 102507 / CH34) (Ralstonia metallidurans)).